The following is a 491-amino-acid chain: MKYQAKNTALSQATDCIVLGIYENNKFSKSFNEIDQLTQGYLNDLVKSGELTGKLAQTILLRDLQGLSAKRLLIVGCGKKGELTERQYKQIIQAVLKTLKETNTREVISYLTEIELKDRDLYWNIRFAIETIEHTNYQFDHFKSQKAETSVLESFIFNTDCNQAQQAISHANAISSGIKAARDIANMPPNICNPAYLAEQAKNLAENSTALSLKVVDEEEMAKLGMNAYLAVSKGSENRAYMSVLTFNNAPDKNAKPIVLVGKGLTFDAGGISLKPAADMDEMKYDMCGAASVFGTMKAIAQLNLPLNVIGVLAGCENLPDGNAYRPGDILTTMNGLTVEVLNTDAEGRLVLCDALTYVERFEPELVIDVATLTGACVVALGQHNSGLVSTDNNLANALLQAATETTDKAWRLPLSEEYQEQLKSPFADLANIGGRWGGAITAGAFLSNFTKKYRWAHLDIAGTAWLQGANKGATGRPVSLLTQFLINQVK.

Mn(2+)-binding residues include K263 and D268. K275 is an active-site residue. D286, D345, and E347 together coordinate Mn(2+). The active site involves R349.

It belongs to the peptidase M17 family. The cofactor is Mn(2+).

It localises to the cytoplasm. The enzyme catalyses Release of an N-terminal amino acid, Xaa-|-Yaa-, in which Xaa is preferably Leu, but may be other amino acids including Pro although not Arg or Lys, and Yaa may be Pro. Amino acid amides and methyl esters are also readily hydrolyzed, but rates on arylamides are exceedingly low.. It catalyses the reaction Release of an N-terminal amino acid, preferentially leucine, but not glutamic or aspartic acids.. Presumably involved in the processing and regular turnover of intracellular proteins. Catalyzes the removal of unsubstituted N-terminal amino acids from various peptides. The protein is Probable cytosol aminopeptidase of Haemophilus influenzae (strain PittEE).